The sequence spans 918 residues: von Willebrand factor A domain-containing protein DDB_G0292016 (918 aa).

The VIT domain occupies 44–172; it reads KRCGLYSLKN…NVKVRVVISS (129 aa). The region spanning 299–467 is the VWFA domain; it reads EFIFLIDCSG…NMEKQVMKLL (169 aa). Residues 625–814 are disordered; that stretch reads VDIMNQSPPI…PSAPSQQKSV (190 aa). Low complexity predominate over residues 650–690; that stretch reads ASGALSSSILSRKRSSSPSTATKRSSSSSFSSSYLSLSSSS. The segment covering 716–746 has biased composition (acidic residues); the sequence is YESDGGDQSSEQDEEEEDDCDDFHEDLDEDL. The segment covering 752-774 has biased composition (basic and acidic residues); the sequence is DVDKKECEKECKKKDSSKVDLKV. Low complexity predominate over residues 777 to 814; sequence SKVPLPSRSPSVSKPTTTSLLSPSPKSAPSAPSQQKSV.

This Dictyostelium discoideum (Social amoeba) protein is von Willebrand factor A domain-containing protein DDB_G0292016.